The sequence spans 231 residues: Triggering receptor expressed on myeloid cells 1 (231 aa).

The first 20 residues, 1–20, serve as a signal peptide directing secretion; it reads MRKTRLWGLLWMFFVSELLA. Topologically, residues 21–202 are extracellular; it reads ATKLTEEKYE…TDIIRVPVFN (182 aa). In terms of domain architecture, Ig-like V-type spans 26 to 131; the sequence is EEKYELKEGQ…LFDRIRLVVT (106 aa). Cys-41 and Cys-110 are oxidised to a cystine. Composition is skewed to polar residues over residues 134–157 and 164–182; these read SSGT…TTTK and TSPT…DVST. The interval 134–182 is disordered; sequence SSGTPGSSENSTPNVYKTPPTTTKALRPLYTSPTTVTQAPPKSTADVST. N-linked (GlcNAc...) asparagine glycans are attached at residues Asn-188 and Asn-191. Residues 203 to 223 form a helical membrane-spanning segment; the sequence is IAILVAGGFLSKSLVFSVLFA. Residues 224–231 are Cytoplasmic-facing; it reads VTLRSFVP.

In terms of assembly, monomer. Homomultimer; when activated. Interacts with TYROBP/DAP12. Interacts with TLR4.

The protein resides in the cell membrane. Functionally, cell surface receptor that plays important roles in innate and adaptive immunity by amplifying inflammatory responses. Upon activation by various ligands such as PGLYRP1, HMGB1 or HSP70, multimerizes and forms a complex with transmembrane adapter TYROBP/DAP12. In turn, initiates a SYK-mediated cascade of tyrosine phosphorylation, activating multiple downstream mediators such as BTK, MAPK1, MAPK3 or phospholipase C-gamma. This cascade promotes the neutrophil- and macrophage-mediated release of pro-inflammatory cytokines and/or chemokines, as well as their migration and thereby amplifies inflammatory responses that are triggered by bacterial and fungal infections. By also promoting the amplification of inflammatory signals that are initially triggered by Toll-like receptor (TLR) and NOD-like receptor engagement, plays a major role in the pathophysiology of acute and chronic inflammatory diseases of different etiologies including septic shock and atherosclerosis. This is Triggering receptor expressed on myeloid cells 1 (TREM1) from Pongo abelii (Sumatran orangutan).